The sequence spans 341 residues: Retinol dehydrogenase 10 (341 aa).

The helical; Signal-anchor transmembrane segment at 3 to 23 (IVVEFFLVTFKVLWAFVLAAA) threads the bilayer. 40–64 (LITGAGSGLGRLFALEFARRRALLV) lines the NADP(+) pocket. S197 provides a ligand contact to substrate. The Proton acceptor role is filled by Y210.

This sequence belongs to the short-chain dehydrogenases/reductases (SDR) family. Detected in retina, entire eyecups and in liver (at protein level).

It localises to the microsome membrane. Its subcellular location is the endoplasmic reticulum membrane. The enzyme catalyses all-trans-retinol + NADP(+) = all-trans-retinal + NADPH + H(+). It participates in cofactor metabolism; retinol metabolism. Its function is as follows. Retinol dehydrogenase with a clear preference for NADP. Converts all-trans-retinol to all-trans-retinal. The protein is Retinol dehydrogenase 10 (Rdh10) of Rattus norvegicus (Rat).